We begin with the raw amino-acid sequence, 91 residues long: Probable Fe(2+)-trafficking protein (91 aa).

Belongs to the Fe(2+)-trafficking protein family.

Functionally, could be a mediator in iron transactions between iron acquisition and iron-requiring processes, such as synthesis and/or repair of Fe-S clusters in biosynthetic enzymes. The protein is Probable Fe(2+)-trafficking protein of Mannheimia succiniciproducens (strain KCTC 0769BP / MBEL55E).